A 394-amino-acid polypeptide reads, in one-letter code: Methylthioribose kinase (394 aa).

ATP contacts are provided by residues N44, K61, and 115-117; that span reads EDL. D233 contributes to the substrate binding site. 250-252 is an ATP binding site; that stretch reads DPE. R337 provides a ligand contact to substrate.

Belongs to the methylthioribose kinase family. In terms of assembly, homodimer.

The catalysed reaction is 5-(methylsulfanyl)-D-ribose + ATP = 5-(methylsulfanyl)-alpha-D-ribose 1-phosphate + ADP + H(+). It functions in the pathway amino-acid biosynthesis; L-methionine biosynthesis via salvage pathway; S-methyl-5-thio-alpha-D-ribose 1-phosphate from S-methyl-5'-thioadenosine (hydrolase route): step 2/2. Catalyzes the phosphorylation of methylthioribose into methylthioribose-1-phosphate. This chain is Methylthioribose kinase, found in Bacillus velezensis (strain DSM 23117 / BGSC 10A6 / LMG 26770 / FZB42) (Bacillus amyloliquefaciens subsp. plantarum).